A 256-amino-acid polypeptide reads, in one-letter code: Triosephosphate isomerase (256 aa).

Position 9–11 (9–11 (NWK)) interacts with substrate. The Electrophile role is filled by H96. E168 acts as the Proton acceptor in catalysis. Residues S213 and 234-235 (GG) contribute to the substrate site.

Belongs to the triosephosphate isomerase family. Homodimer.

It localises to the cytoplasm. It carries out the reaction D-glyceraldehyde 3-phosphate = dihydroxyacetone phosphate. Its pathway is carbohydrate biosynthesis; gluconeogenesis. The protein operates within carbohydrate degradation; glycolysis; D-glyceraldehyde 3-phosphate from glycerone phosphate: step 1/1. Functionally, involved in the gluconeogenesis. Catalyzes stereospecifically the conversion of dihydroxyacetone phosphate (DHAP) to D-glyceraldehyde-3-phosphate (G3P). The chain is Triosephosphate isomerase from Baumannia cicadellinicola subsp. Homalodisca coagulata.